The primary structure comprises 198 residues: V-type ATP synthase subunit E 1 (198 aa).

The protein belongs to the V-ATPase E subunit family.

Produces ATP from ADP in the presence of a proton gradient across the membrane. This Clostridium tetani (strain Massachusetts / E88) protein is V-type ATP synthase subunit E 1.